A 252-amino-acid polypeptide reads, in one-letter code: MESLLQTIKLMLRYIQKALILFFLFLYVVVGKVLMFLFPQTMASVLKSRFEISGVHDPKFQYEDWGPTFFTYKFLRSVLEIMWMRLEDEAFVGHSAPNTPVVDLSGELHHIWDYLQGTRPLVLSFGSCTUPPFLFRLGEFNKLVNEFNSIADFLIIYIDEAHAADEWALKNNLHIKKHRSLQDRLAAAKRLMEESPSCPVVLDTMSNLCSAKYAALPERLYILQEGKIIYKGKMGPWGYKPEEVCSVLEKKK.

Topologically, residues 1–17 (MESLLQTIKLMLRYIQK) are extracellular. Residues 18 to 38 (ALILFFLFLYVVVGKVLMFLF) form a helical; Signal-anchor for type III membrane protein membrane-spanning segment. At 39 to 252 (PQTMASVLKS…EVCSVLEKKK (214 aa)) the chain is on the cytoplasmic side. U130 is a catalytic residue. Position 130 (U130) is a non-standard amino acid, selenocysteine.

The protein belongs to the iodothyronine deiodinase family. Predominantly monomer. Can form homodimers but homodimerization is not essential for enzyme activity.

Its subcellular location is the cell membrane. The protein localises to the endoplasmic reticulum membrane. The protein resides in the basolateral cell membrane. The enzyme catalyses 3,3',5-triiodo-L-thyronine + iodide + A + H(+) = L-thyroxine + AH2. It catalyses the reaction 3,3',5'-triiodo-L-thyronine + iodide + A + H(+) = L-thyroxine + AH2. It carries out the reaction 3,3'-diiodo-L-thyronine + iodide + A + H(+) = 3,3',5'-triiodo-L-thyronine + AH2. The catalysed reaction is 3,3'-diiodo-L-thyronine + iodide + A + H(+) = 3,3',5-triiodo-L-thyronine + AH2. The enzyme catalyses 3'-iodo-L-thyronine + iodide + A + H(+) = 3',5'-diiodo-L-thyronine + AH2. It catalyses the reaction 3-iodo-L-thyronine + iodide + A + H(+) = 3,5-diiodo-L-thyronine + AH2. It carries out the reaction 3-iodo-L-thyronine + iodide + A + H(+) = 3,3'-diiodo-L-thyronine + AH2. The catalysed reaction is 3,3'-diiodothyronamine + iodide + A + H(+) = 3,3',5'-triiodothyronamine + AH2. The enzyme catalyses 3'-iodothyronamine + iodide + A + H(+) = 3',5'-diiodothyronamine + AH2. It catalyses the reaction 3-iodothyronamine + iodide + A + H(+) = 3,3'-diiodothyronamine + AH2. It carries out the reaction 3,3'-diiodothyronamine + iodide + A + H(+) = 3,3',5-triiodothyronamine + AH2. The catalysed reaction is 3-iodothyronamine + iodide + A + H(+) = 3,5-diiodothyronamine + AH2. The enzyme catalyses 3,3'-diiodo-L-thyronine sulfate + iodide + A + H(+) = 3,3',5'-triiodo-L-thyronine sulfate + AH2. It catalyses the reaction 3,3',5'-triiodo-L-thyronine sulfate + iodide + A + H(+) = L-thyroxine sulfate + AH2. It carries out the reaction 3,3'-diiodo-L-thyronine sulfate + iodide + A + H(+) = 3,3',5-triiodo-L-thyronine sulfate + AH2. With respect to regulation, lacks sensitivity to 6-n-propylthiouracil. Its function is as follows. Plays a crucial role in the metabolism of thyroid hormones (TH) and has specific roles in TH activation and inactivation by deiodination. Catalyzes the deiodination of L-thyroxine (T4) to 3,5,3'-triiodothyronine (T3) and 3,3',5'-triiodothyronine (rT3) to 3,3'-diiodothyronine (3,3'-T2) via outer-ring deiodination (ORD). Catalyzes the deiodiantion of T4 to rT3 and T3 to 3,3'-T2 via inner-ring deiodination (IRD). Catalyzes the deiodination of 3',5'-diiodothyronine (3',5'-T2) to 3'-monoiodothyronine (3'-T1) via ORD. Catalyzes the deiodination of 3,5-diiodothyronine (3,5-T2) to 3-monoiodothyronine (3-T1) and 3,3'-T2 to 3-T1 via IRD. Catalyzes the phenolic ring deiodinations of 3,3',5'-triiodothyronamine, 3',5'-diiodothyronamine and 3,3'-diiodothyronamine as well as tyrosyl ring deiodinations of 3,5,3'-triiodothyronamine and 3,5-diiodothyronamine. Catalyzes the deiodination of L-thyroxine sulfate and 3,3',5-triiodo-L-thyronine sulfate via IRD and of 3,3',5'-triiodo-L-thyronine sulfate via ORD. The sequence is that of Type I iodothyronine deiodinase (dio1) from Xenopus laevis (African clawed frog).